The sequence spans 376 residues: MSCEVLALTEELINRQSVTPEDAGCQQLMAEYLAPLGFDIESMVFDDTTNMWARKGTGGPVFCFAGHTDVVPSGPAEKWTFPPFTATQHEGQLYGRGAADMKGSLAAMLVATKAFVTKHPEHSGSIAFLITSDEEGPFINGTTRVIDTLEARNEKMTWCLVGEPSSTTLIGDVVKNGRRGSLTGDITVKGVQGHVAYPHLAKNPIHLSAPAFAELAQTHWDSGNASFPPTSFQVSNINSGTGAGNVIPGDLSACFNFRFSTEVTDKQLIERVTTILDKYDFDYHIDWTFNGQPFLTDSGKLVEATQSAIKDVTGRETELSTAGGTSDGRFIAPTGAQVIELGPINATIHKIDENVNINDLAQLAKIYEGILQRLLA.

Zn(2+) is bound at residue His67. The active site involves Asp69. Position 100 (Asp100) interacts with Zn(2+). The Proton acceptor role is filled by Glu134. Zn(2+) is bound by residues Glu135, Glu163, and His349.

The protein belongs to the peptidase M20A family. DapE subfamily. As to quaternary structure, homodimer. Zn(2+) is required as a cofactor. Co(2+) serves as cofactor.

It carries out the reaction N-succinyl-(2S,6S)-2,6-diaminopimelate + H2O = (2S,6S)-2,6-diaminopimelate + succinate. The protein operates within amino-acid biosynthesis; L-lysine biosynthesis via DAP pathway; LL-2,6-diaminopimelate from (S)-tetrahydrodipicolinate (succinylase route): step 3/3. In terms of biological role, catalyzes the hydrolysis of N-succinyl-L,L-diaminopimelic acid (SDAP), forming succinate and LL-2,6-diaminopimelate (DAP), an intermediate involved in the bacterial biosynthesis of lysine and meso-diaminopimelic acid, an essential component of bacterial cell walls. The chain is Succinyl-diaminopimelate desuccinylase from Pseudoalteromonas atlantica (strain T6c / ATCC BAA-1087).